The sequence spans 195 residues: Adenylate kinase (195 aa).

11–16 is a binding site for ATP; sequence GAGKGT. An NMP region spans residues 31–60; it reads STGDIFRAAVRNQTPLGQQVQAYLDSGRLV. Residues Thr-32, Arg-37, 58 to 60, 86 to 89, and Gln-93 each bind AMP; these read RLV and GFPR. The interval 127 to 137 is LID; sequence LRAEKESRKDD. Arg-128 contributes to the ATP binding site. Residues Arg-134 and Arg-145 each coordinate AMP. Gln-173 lines the ATP pocket.

This sequence belongs to the adenylate kinase family. Monomer.

The protein localises to the cytoplasm. It carries out the reaction AMP + ATP = 2 ADP. It participates in purine metabolism; AMP biosynthesis via salvage pathway; AMP from ADP: step 1/1. Its function is as follows. Catalyzes the reversible transfer of the terminal phosphate group between ATP and AMP. Plays an important role in cellular energy homeostasis and in adenine nucleotide metabolism. This is Adenylate kinase from Cyanothece sp. (strain PCC 7425 / ATCC 29141).